Here is a 510-residue protein sequence, read N- to C-terminus: Fumarate hydratase, mitochondrial (510 aa).

The transit peptide at Met-1–Met-44 directs the protein to the mitochondrion. N6-acetyllysine; alternate occurs at positions 61, 66, and 80. Residues Lys-61, Lys-66, and Lys-80 each carry the N6-succinyllysine; alternate modification. Phosphothreonine occurs at positions 85 and 90. The residue at position 94 (Lys-94) is an N6-acetyllysine. Residues Lys-115 and Lys-122 each carry the N6-acetyllysine; alternate modification. N6-succinyllysine; alternate occurs at positions 115 and 122. Substrate-binding positions include Ser-145 to Thr-147, His-176 to Asp-179, and Ser-186 to Asn-188. An N6-acetyllysine modification is found at Lys-213. Lys-223 is subject to N6-acetyllysine; alternate. N6-succinyllysine; alternate is present on Lys-223. Thr-234 contributes to the substrate binding site. The Proton donor/acceptor role is filled by His-235. Thr-236 carries the phosphothreonine; by PRKDC modification. At Lys-256 the chain carries N6-acetyllysine. At Lys-292 the chain carries N6-acetyllysine; alternate. N6-succinyllysine; alternate is present on Lys-292. The active site involves Ser-365. Residues Ser-366 and Lys-371–Asn-373 each bind substrate. Ser-366 is modified (phosphoserine). N6-succinyllysine occurs at positions 467 and 473. Position 502 is an N6-acetyllysine (Lys-502).

It belongs to the class-II fumarase/aspartase family. Fumarase subfamily. As to quaternary structure, homotetramer. Interacts with H2AZ1. In terms of processing, phosphorylation at Thr-236 by PRKDC in response to DNA damage promotes translocation to the nucleus and recruitment to DNA double-strand breaks (DSBs). Expressed in red blood cells; underexpressed in red blood cells (cytoplasm) of patients with hereditary non-spherocytic hemolytic anemia of unknown etiology.

It localises to the mitochondrion. The protein localises to the cytoplasm. It is found in the cytosol. Its subcellular location is the nucleus. The protein resides in the chromosome. The enzyme catalyses (S)-malate = fumarate + H2O. Its pathway is carbohydrate metabolism; tricarboxylic acid cycle; (S)-malate from fumarate: step 1/1. Functionally, catalyzes the reversible stereospecific interconversion of fumarate to L-malate. Experiments in other species have demonstrated that specific isoforms of this protein act in defined pathways and favor one direction over the other. Catalyzes the hydration of fumarate to L-malate in the tricarboxylic acid (TCA) cycle to facilitate a transition step in the production of energy in the form of NADH. Its function is as follows. Catalyzes the dehydration of L-malate to fumarate. Fumarate metabolism in the cytosol plays a role during urea cycle and arginine metabolism; fumarate being a by-product of the urea cycle and amino-acid catabolism. Also plays a role in DNA repair by promoting non-homologous end-joining (NHEJ). In response to DNA damage and phosphorylation by PRKDC, translocates to the nucleus and accumulates at DNA double-strand breaks (DSBs): acts by catalyzing formation of fumarate, an inhibitor of KDM2B histone demethylase activity, resulting in enhanced dimethylation of histone H3 'Lys-36' (H3K36me2). This chain is Fumarate hydratase, mitochondrial, found in Homo sapiens (Human).